The chain runs to 285 residues: Flagellar filament core protein flaB2 (285 aa).

The protein belongs to the bacterial flagellin family. As to quaternary structure, the flagellum consists of an outer layer composed of two sheath proteins, flaA1 (44 kDa) and flaA2 (35 kDa) around a core that contains three proteins flaB1 (37 kDa), flaB2 (34 kDa) and flaB3 (32 kDa).

It is found in the periplasmic flagellum. It localises to the periplasm. Functionally, component of the core of the flagella. In Brachyspira hyodysenteriae (Treponema hyodysenteriae), this protein is Flagellar filament core protein flaB2 (flaB2).